The sequence spans 375 residues: E3 ubiquitin-protein ligase RHF2A (375 aa).

The segment at 33-74 (CSICLESFCESDPSTLTSCKHEYHLQCILEWCQRSSQCPMCW) adopts an RING-type; atypical zinc-finger fold. The segment covering 146–159 (RARHGVRREGHRSR) has biased composition (basic residues). Disordered regions lie at residues 146–165 (RARH…SQGH), 172–262 (SSQP…SESL), and 318–375 (ERLE…SGSS). A compositionally biased stretch (pro residues) spans 178–188 (SSPPPHPPMPS). Polar residues-rich tracts occupy residues 211–245 (SHQS…SSPS) and 327–336 (RPSTASVSDV). Over residues 337–365 (SENHTPETNNEHNRAAAGDEHSVNERGVK) the composition is skewed to basic and acidic residues.

The catalysed reaction is S-ubiquitinyl-[E2 ubiquitin-conjugating enzyme]-L-cysteine + [acceptor protein]-L-lysine = [E2 ubiquitin-conjugating enzyme]-L-cysteine + N(6)-ubiquitinyl-[acceptor protein]-L-lysine.. Its pathway is protein modification; protein ubiquitination. Its function is as follows. E3 ubiquitin-protein ligase involved in the positive regulation of the gametogenesis progression. Required for the degradation of KRP6, a cyclin-dependent kinase inhibitor which accumulates during meiosis and blocks the progression of subsequent mitoses during gametophytes development. Functions in association with RHF1A. This Arabidopsis thaliana (Mouse-ear cress) protein is E3 ubiquitin-protein ligase RHF2A.